We begin with the raw amino-acid sequence, 512 residues long: 2-isopropylmalate synthase (512 aa).

Residues 5 to 268 form the Pyruvate carboxyltransferase domain; sequence LIIFDTTLRD…DVGIDTQHIV (264 aa). 4 residues coordinate Mn(2+): Asp-14, His-202, His-204, and Asn-239. Residues 394 to 512 are regulatory domain; it reads GFVSLAQHSE…SKAERVAAQG (119 aa).

It belongs to the alpha-IPM synthase/homocitrate synthase family. LeuA type 1 subfamily. As to quaternary structure, homodimer. Mn(2+) serves as cofactor.

It is found in the cytoplasm. The enzyme catalyses 3-methyl-2-oxobutanoate + acetyl-CoA + H2O = (2S)-2-isopropylmalate + CoA + H(+). Its pathway is amino-acid biosynthesis; L-leucine biosynthesis; L-leucine from 3-methyl-2-oxobutanoate: step 1/4. Its function is as follows. Catalyzes the condensation of the acetyl group of acetyl-CoA with 3-methyl-2-oxobutanoate (2-ketoisovalerate) to form 3-carboxy-3-hydroxy-4-methylpentanoate (2-isopropylmalate). This Acidovorax ebreus (strain TPSY) (Diaphorobacter sp. (strain TPSY)) protein is 2-isopropylmalate synthase.